The chain runs to 101 residues: Protein Tat (101 aa).

The tract at residues 1-24 (MEPVDPNLEPWKHPGSQPRTACTN) is interaction with human CREBBP. The tract at residues 1–48 (MEPVDPNLEPWKHPGSQPRTACTNCYCKKCCFHCQVCFITKGLGISYG) is transactivation. Zn(2+) is bound by residues Cys22, Cys25, and Cys27. The segment at 22–37 (CTNCYCKKCCFHCQVC) is cysteine-rich. Lys28 is subject to N6-acetyllysine; by host PCAF. Positions 30, 33, 34, and 37 each coordinate Zn(2+). Residues 38–48 (FITKGLGISYG) are core. Residues 48-101 (GRKKRRQRQRAPDSSQNHQDSLSKQPSSQPRGDPTGPKESKKEVERETETDPLD) are disordered. A Nuclear localization signal, RNA-binding (TAR), and protein transduction motif is present at residues 49 to 57 (RKKRRQRQR). Residues 49–86 (RKKRRQRQRAPDSSQNHQDSLSKQPSSQPRGDPTGPKE) are interaction with the host capping enzyme RNGTT. An N6-acetyllysine; by host EP300 and GCN5L2 mark is found at Lys50 and Lys51. Arg52 and Arg53 each carry asymmetric dimethylarginine; by host PRMT6. Residues 59–77 (PDSSQNHQDSLSKQPSSQP) show a composition bias toward polar residues. Lys71 is covalently cross-linked (Glycyl lysine isopeptide (Lys-Gly) (interchain with G-Cter in ubiquitin)). A Cell attachment site motif is present at residues 78–80 (RGD). Residues 83–101 (GPKESKKEVERETETDPLD) show a composition bias toward basic and acidic residues.

The protein belongs to the lentiviruses Tat family. In terms of assembly, interacts with host CCNT1. Associates with the P-TEFb complex composed at least of Tat, P-TEFb (CDK9 and CCNT1), TAR RNA, RNA Pol II. Recruits the HATs CREBBP, TAF1/TFIID, EP300, PCAF and GCN5L2. Interacts with host KAT5/Tip60; this interaction targets the latter to degradation. Interacts with the host deacetylase SIRT1. Interacts with host capping enzyme RNGTT; this interaction stimulates RNGTT. Binds to host KDR, and to the host integrins ITGAV/ITGB3 and ITGA5/ITGB1. Interacts with host KPNB1/importin beta-1 without previous binding to KPNA1/importin alpha-1. Interacts with EIF2AK2. Interacts with host nucleosome assembly protein NAP1L1; this interaction may be required for the transport of Tat within the nucleus, since the two proteins interact at the nuclear rim. Interacts with host C1QBP/SF2P32; this interaction involves lysine-acetylated Tat. Interacts with the host chemokine receptors CCR2, CCR3 and CXCR4. Interacts with host DPP4/CD26; this interaction may trigger an anti-proliferative effect. Interacts with host LDLR. Interacts with the host extracellular matrix metalloproteinase MMP1. Interacts with host PRMT6; this interaction mediates Tat's methylation. Interacts with, and is ubiquitinated by MDM2/Hdm2. Interacts with host PSMC3 and HTATIP2. Interacts with STAB1; this interaction may overcome SATB1-mediated repression of IL2 and IL2RA (interleukin) in T cells by binding to the same domain than HDAC1. Interacts (when acetylated) with human CDK13, thereby increasing HIV-1 mRNA splicing and promoting the production of the doubly spliced HIV-1 protein Nef. Interacts with host TBP; this interaction modulates the activity of transcriptional pre-initiation complex. Interacts with host RELA. Interacts with host PLSCR1; this interaction negatively regulates Tat transactivation activity by altering its subcellular distribution. Asymmetrical arginine methylation by host PRMT6 seems to diminish the transactivation capacity of Tat and affects the interaction with host CCNT1. Post-translationally, acetylation by EP300, CREBBP, GCN5L2/GCN5 and PCAF regulates the transactivation activity of Tat. EP300-mediated acetylation of Lys-50 promotes dissociation of Tat from the TAR RNA through the competitive binding to PCAF's bromodomain. In addition, the non-acetylated Tat's N-terminus can also interact with PCAF. PCAF-mediated acetylation of Lys-28 enhances Tat's binding to CCNT1. Lys-50 is deacetylated by SIRT1. In terms of processing, polyubiquitination by host MDM2 does not target Tat to degradation, but activates its transactivation function and fosters interaction with CCNT1 and TAR RNA. Phosphorylated by EIF2AK2 on serine and threonine residues adjacent to the basic region important for TAR RNA binding and function. Phosphorylation of Tat by EIF2AK2 is dependent on the prior activation of EIF2AK2 by dsRNA.

Its subcellular location is the host nucleus. It localises to the host nucleolus. The protein localises to the host cytoplasm. It is found in the secreted. Transcriptional activator that increases RNA Pol II processivity, thereby increasing the level of full-length viral transcripts. Recognizes a hairpin structure at the 5'-LTR of the nascent viral mRNAs referred to as the transactivation responsive RNA element (TAR) and recruits the cyclin T1-CDK9 complex (P-TEFb complex) that will in turn hyperphosphorylate the RNA polymerase II to allow efficient elongation. The CDK9 component of P-TEFb and other Tat-activated kinases hyperphosphorylate the C-terminus of RNA Pol II that becomes stabilized and much more processive. Other factors such as HTATSF1/Tat-SF1, SUPT5H/SPT5, and HTATIP2 are also important for Tat's function. Besides its effect on RNA Pol II processivity, Tat induces chromatin remodeling of proviral genes by recruiting the histone acetyltransferases (HATs) CREBBP, EP300 and PCAF to the chromatin. This also contributes to the increase in proviral transcription rate, especially when the provirus integrates in transcriptionally silent region of the host genome. To ensure maximal activation of the LTR, Tat mediates nuclear translocation of NF-kappa-B by interacting with host RELA. Through its interaction with host TBP, Tat may also modulate transcription initiation. Tat can reactivate a latently infected cell by penetrating in it and transactivating its LTR promoter. In the cytoplasm, Tat is thought to act as a translational activator of HIV-1 mRNAs. In terms of biological role, extracellular circulating Tat can be endocytosed by surrounding uninfected cells via the binding to several surface receptors such as CD26, CXCR4, heparan sulfate proteoglycans (HSPG) or LDLR. Neurons are rarely infected, but they internalize Tat via their LDLR. Through its interaction with nuclear HATs, Tat is potentially able to control the acetylation-dependent cellular gene expression. Modulates the expression of many cellular genes involved in cell survival, proliferation or in coding for cytokines or cytokine receptors. Tat plays a role in T-cell and neurons apoptosis. Tat induced neurotoxicity and apoptosis probably contribute to neuroAIDS. Circulating Tat also acts as a chemokine-like and/or growth factor-like molecule that binds to specific receptors on the surface of the cells, affecting many cellular pathways. In the vascular system, Tat binds to ITGAV/ITGB3 and ITGA5/ITGB1 integrins dimers at the surface of endothelial cells and competes with bFGF for heparin-binding sites, leading to an excess of soluble bFGF. This chain is Protein Tat, found in Human immunodeficiency virus type 1 group M subtype B (isolate SF33) (HIV-1).